Consider the following 266-residue polypeptide: Type III pantothenate kinase (266 aa).

6-13 serves as a coordination point for ATP; that stretch reads DAGNTNIV. 107 to 110 lines the substrate pocket; that stretch reads GADR. The active-site Proton acceptor is the Asp-109. Asp-129 provides a ligand contact to K(+). Position 132 (Thr-132) interacts with ATP. Position 184 (Thr-184) interacts with substrate.

This sequence belongs to the type III pantothenate kinase family. Homodimer. It depends on NH4(+) as a cofactor. K(+) serves as cofactor.

It localises to the cytoplasm. The enzyme catalyses (R)-pantothenate + ATP = (R)-4'-phosphopantothenate + ADP + H(+). It functions in the pathway cofactor biosynthesis; coenzyme A biosynthesis; CoA from (R)-pantothenate: step 1/5. Catalyzes the phosphorylation of pantothenate (Pan), the first step in CoA biosynthesis. This is Type III pantothenate kinase from Acidiphilium cryptum (strain JF-5).